Here is a 102-residue protein sequence, read N- to C-terminus: Large ribosomal subunit protein bL21 (102 aa).

It belongs to the bacterial ribosomal protein bL21 family. In terms of assembly, part of the 50S ribosomal subunit. Contacts protein L20.

In terms of biological role, this protein binds to 23S rRNA in the presence of protein L20. In Stenotrophomonas maltophilia (strain K279a), this protein is Large ribosomal subunit protein bL21.